The chain runs to 257 residues: MDRIIEKLESGWWIVSHEQKLWLPYGELPHGLAANFDLVGQRALRIGEWQGEPVWLVLQHRRHDMGSVRQVIDQDAGLFQLAGRGVQLAEFYRSHKFCGYCGHPMHPSKTEWAMLCSHCRDRYYPQIAPCIIVAIRREDSILLARHVRHRNGVHTVLAGFVEVGETLEQAVAREVMEESGIKVKNLRYVTSQPWPFPQSLMTAFMAEYDSGEIVIDPKELLEANWYRYDDLPLLPPPGTVARRLIEDTVAMCRAEYD.

Residue R69 participates in substrate binding. Residues C98 and C101 each contribute to the Zn(2+) site. E111 is a binding site for substrate. Zn(2+)-binding residues include C116 and C119. Y124 is a binding site for substrate. In terms of domain architecture, Nudix hydrolase spans 125 to 248 (PQIAPCIIVA…TVARRLIEDT (124 aa)). Positions 158, 174, and 178 each coordinate a divalent metal cation. The Nudix box motif lies at 159 to 180 (GFVEVGETLEQAVAREVMEESG). Substrate is bound at residue 192–199 (QPWPFPQS). E219 is an a divalent metal cation binding site. A241 lines the substrate pocket.

Belongs to the Nudix hydrolase family. NudC subfamily. Homodimer. It depends on Mg(2+) as a cofactor. The cofactor is Mn(2+). Requires Zn(2+) as cofactor.

The enzyme catalyses a 5'-end NAD(+)-phospho-ribonucleoside in mRNA + H2O = a 5'-end phospho-adenosine-phospho-ribonucleoside in mRNA + beta-nicotinamide D-ribonucleotide + 2 H(+). It carries out the reaction NAD(+) + H2O = beta-nicotinamide D-ribonucleotide + AMP + 2 H(+). It catalyses the reaction NADH + H2O = reduced beta-nicotinamide D-ribonucleotide + AMP + 2 H(+). In terms of biological role, mRNA decapping enzyme that specifically removes the nicotinamide adenine dinucleotide (NAD) cap from a subset of mRNAs by hydrolyzing the diphosphate linkage to produce nicotinamide mononucleotide (NMN) and 5' monophosphate mRNA. The NAD-cap is present at the 5'-end of some mRNAs and stabilizes RNA against 5'-processing. Has preference for mRNAs with a 5'-end purine. Catalyzes the hydrolysis of a broad range of dinucleotide pyrophosphates. The sequence is that of NAD-capped RNA hydrolase NudC from Salmonella typhi.